A 660-amino-acid polypeptide reads, in one-letter code: Arginine--tRNA ligase, cytoplasmic (660 aa).

Residue Met1 is modified to N-acetylmethionine. The could be involved in the assembly of the multisynthetase complex stretch occupies residues 1 to 72; it reads MDALVAHCSA…QAERNKPTKT (72 aa). L-arginine-binding positions include 200 to 202, His211, Tyr384, Asp388, and Gln412; that span reads SPN. The 'HIGH' region motif lies at 201–212; the sequence is PNIAKEMHVGHL. The segment at 529–543 is interaction with tRNA; sequence NTAAYLLYAFTRIRS.

Belongs to the class-I aminoacyl-tRNA synthetase family. Interacts (via N-terminus) with AIMP1 (via N-terminus); this stimulates its catalytic activity. Interacts (via N-terminus) with LARS2 (via C-terminus). Monomer. Part of a multisubunit complex that groups tRNA ligases for Arg (RARS1), Asp (DARS1), Gln (QARS1), Ile (IARS1), Leu (LARS1), Lys (KARS1), Met (MARS1) the bifunctional ligase for Glu and Pro (EPRS1) and the auxiliary subunits AIMP1/p43, AIMP2/p38 and EEF1E1/p18. Interacts with QARS1. Part of a complex composed of RARS1, QARS1 and AIMP1.

It is found in the cytoplasm. The protein localises to the cytosol. The enzyme catalyses tRNA(Arg) + L-arginine + ATP = L-arginyl-tRNA(Arg) + AMP + diphosphate. Forms part of a macromolecular complex that catalyzes the attachment of specific amino acids to cognate tRNAs during protein synthesis. Modulates the secretion of AIMP1 and may be involved in generation of the inflammatory cytokine EMAP2 from AIMP1. This is Arginine--tRNA ligase, cytoplasmic (RARS1) from Bos taurus (Bovine).